A 236-amino-acid polypeptide reads, in one-letter code: 3-deoxy-D-manno-octulosonic acid kinase (236 aa).

Residue D167 is part of the active site.

This sequence belongs to the protein kinase superfamily. KdkA/RfaP family.

The protein resides in the cell inner membrane. The enzyme catalyses an alpha-Kdo-(2-&gt;6)-lipid IVA + ATP = a 4-O-phospho-alpha-Kdo-(2-&gt;6)-lipid IVA + ADP + H(+). The protein operates within bacterial outer membrane biogenesis; LPS core biosynthesis. Catalyzes the ATP-dependent phosphorylation of the 3-deoxy-D-manno-octulosonic acid (Kdo) residue in Kdo-lipid IV(A) at the 4-OH position. This is 3-deoxy-D-manno-octulosonic acid kinase from Vibrio vulnificus (strain CMCP6).